We begin with the raw amino-acid sequence, 561 residues long: Nucleoprotein (561 aa).

The segment at 53–237 (MRKDKRSEAD…ITQEPAQINI (185 aa)) is binding site for the cap structure m7GTP. Asp-380 and Glu-382 together coordinate Mn(2+). Zn(2+) contacts are provided by Glu-390, Cys-497, His-500, and Cys-521. Asp-525 is a Mn(2+) binding site.

It belongs to the arenaviridae nucleocapsid protein family. Homomultimerizes to form the nucleocapsid. Binds to viral genomic RNA. Interacts with glycoprotein G2. Interacts with protein Z; this interaction probably directs the encapsidated genome to budding sites. Interacts with protein L; this interaction does not interfere with Z-L interaction. Interacts with host IKBKE (via Protein kinase domain); the interaction inhibits IKBKE kinase activity.

The protein resides in the virion. It localises to the host cytoplasm. Functionally, encapsidates the genome, protecting it from nucleases. The encapsidated genomic RNA is termed the nucleocapsid (NC). Serves as template for viral transcription and replication. The increased presence of protein N in host cell does not seem to trigger the switch from transcription to replication as observed in other negative strain RNA viruses. Through the interaction with host IKBKE, strongly inhibits the phosphorylation and nuclear translocation of host IRF3, a protein involved in interferon activation pathway, leading to the inhibition of interferon-beta and IRF3-dependent promoters activation. Also encodes a functional 3'-5' exoribonuclease that degrades preferentially dsRNA substrates and thereby participates in the suppression of interferon induction. The polypeptide is Nucleoprotein (Allpahuayo mammarenavirus (isolate Rat/Peru/CLHP-2472/1997) (ALLV)).